The chain runs to 145 residues: Alpha-amylase/trypsin inhibitor CM1 (145 aa).

A signal peptide spans 1–25; sequence MASKSSISPLLLATVLVSVFAAATA.

It belongs to the protease inhibitor I6 (cereal trypsin/alpha-amylase inhibitor) family. In terms of assembly, subunit of the tetrameric inhibitor. In terms of tissue distribution, endosperm.

The protein resides in the secreted. Functionally, alpha-amylase/trypsin inhibitor. It could be involved in insect defense mechanisms. The chain is Alpha-amylase/trypsin inhibitor CM1 from Triticum aestivum (Wheat).